The sequence spans 848 residues: DIS3-like exonuclease 2 (848 aa).

Residues 153–173 (KGDRNSGKTDNNSPNKTEKRC) are disordered. Mg(2+)-binding residues include aspartate 345 and aspartate 354.

It belongs to the RNR ribonuclease family. DIS3L2 subfamily. The cofactor is Mg(2+). It depends on Mn(2+) as a cofactor. In terms of processing, cleaved by caspase ced-3 in vitro.

The protein localises to the cytoplasm. The protein resides in the P-body. In terms of biological role, 3'-5'-exoribonuclease that specifically recognizes RNAs polyuridylated at their 3' end and mediates their degradation. Component of an exosome-independent RNA degradation pathway that mediates degradation of cytoplasmic mRNAs that have been deadenylated and subsequently uridylated at their 3'. In Caenorhabditis elegans, this protein is DIS3-like exonuclease 2.